The sequence spans 347 residues: NADH-quinone oxidoreductase subunit H (347 aa).

The next 8 helical transmembrane spans lie at isoleucine 25–methionine 45, phenylalanine 95–isoleucine 115, isoleucine 128–glycine 148, isoleucine 168–phenylalanine 188, glycine 200–valine 220, phenylalanine 251–phenylalanine 271, phenylalanine 284–leucine 304, and valine 324–serine 344.

The protein belongs to the complex I subunit 1 family. NDH-1 is composed of 14 different subunits. Subunits NuoA, H, J, K, L, M, N constitute the membrane sector of the complex.

It is found in the cell inner membrane. It carries out the reaction a quinone + NADH + 5 H(+)(in) = a quinol + NAD(+) + 4 H(+)(out). In terms of biological role, NDH-1 shuttles electrons from NADH, via FMN and iron-sulfur (Fe-S) centers, to quinones in the respiratory chain. The immediate electron acceptor for the enzyme in this species is believed to be ubiquinone. Couples the redox reaction to proton translocation (for every two electrons transferred, four hydrogen ions are translocated across the cytoplasmic membrane), and thus conserves the redox energy in a proton gradient. This subunit may bind ubiquinone. In Psychrobacter cryohalolentis (strain ATCC BAA-1226 / DSM 17306 / VKM B-2378 / K5), this protein is NADH-quinone oxidoreductase subunit H.